Consider the following 246-residue polypeptide: Probable transcriptional regulatory protein APJL_1171 (246 aa).

It belongs to the TACO1 family.

It localises to the cytoplasm. The sequence is that of Probable transcriptional regulatory protein APJL_1171 from Actinobacillus pleuropneumoniae serotype 3 (strain JL03).